Reading from the N-terminus, the 424-residue chain is Splicing factor 3B subunit 4 (424 aa).

An N-acetylalanine modification is found at A2. 2 RRM domains span residues 13–91 and 100–179; these read ATVY…KASA and ANIF…YAFK. A Phosphotyrosine modification is found at Y56. The tract at residues 207-424 is disordered; that stretch reads PHQLFADAPP…RGPLRGPLPQ (218 aa). Positions 222–231 are enriched in low complexity; the sequence is NPVVSSLGSG. A compositionally biased stretch (pro residues) spans 232-268; sequence LPPPGMPPPGSFPPPVPPPGALPPGIPPAMPPPPMPP. Low complexity-rich tracts occupy residues 269–280 and 303–323; these read GAAGHGPPSAGT and HPGM…GHPH. Composition is skewed to pro residues over residues 332 to 381 and 388 to 424; these read QPPP…PLMP and PPRP…PLPQ.

It belongs to the SF3B4 family. Component of the 17S U2 SnRNP complex, a ribonucleoprotein complex that contains small nuclear RNA (snRNA) U2 and a number of specific proteins. Part of the SF3B subcomplex of the 17S U2 SnRNP complex. SF3B associates with the splicing subcomplex SF3A and a 12S RNA unit to form the U2 small nuclear ribonucleoproteins complex (U2 snRNP). SF3B4 has been found in complex spliceosome 'B' and 'C' as well. Component of the minor (U12-type spliceosome) spliceosome. Found in a complex with PRMT9, SF3B2 and SF3B4.

The protein localises to the nucleus. Its function is as follows. Component of the 17S U2 SnRNP complex of the spliceosome, a large ribonucleoprotein complex that removes introns from transcribed pre-mRNAs. The 17S U2 SnRNP complex (1) directly participates in early spliceosome assembly and (2) mediates recognition of the intron branch site during pre-mRNA splicing by promoting the selection of the pre-mRNA branch-site adenosine, the nucleophile for the first step of splicing. Within the 17S U2 SnRNP complex, SF3B4 is part of the SF3B subcomplex, which is required for 'A' complex assembly formed by the stable binding of U2 snRNP to the branchpoint sequence in pre-mRNA. Sequence independent binding of SF3A and SF3B subcomplexes upstream of the branch site is essential, it may anchor U2 snRNP to the pre-mRNA. May also be involved in the assembly of the 'E' complex. Also acts as a component of the minor spliceosome, which is involved in the splicing of U12-type introns in pre-mRNAs. In Homo sapiens (Human), this protein is Splicing factor 3B subunit 4 (SF3B4).